Consider the following 466-residue polypeptide: 3-isopropylmalate dehydratase large subunit (466 aa).

Residues Cys-347, Cys-407, and Cys-410 each coordinate [4Fe-4S] cluster.

This sequence belongs to the aconitase/IPM isomerase family. LeuC type 1 subfamily. In terms of assembly, heterodimer of LeuC and LeuD. It depends on [4Fe-4S] cluster as a cofactor.

It catalyses the reaction (2R,3S)-3-isopropylmalate = (2S)-2-isopropylmalate. The protein operates within amino-acid biosynthesis; L-leucine biosynthesis; L-leucine from 3-methyl-2-oxobutanoate: step 2/4. Functionally, catalyzes the isomerization between 2-isopropylmalate and 3-isopropylmalate, via the formation of 2-isopropylmaleate. This Shewanella piezotolerans (strain WP3 / JCM 13877) protein is 3-isopropylmalate dehydratase large subunit.